A 441-amino-acid polypeptide reads, in one-letter code: Serine/threonine-protein phosphatase 2A activator 1 (441 aa).

Polar residues-rich tracts occupy residues 66–75 (NIPPSNTTHS) and 421–432 (QRQDDLNSTTYR). 2 disordered regions span residues 66–100 (NIPP…SSNQ) and 421–441 (QRQD…LGRN).

The protein belongs to the PTPA-type PPIase family.

It is found in the cytoplasm. The protein resides in the nucleus. The enzyme catalyses [protein]-peptidylproline (omega=180) = [protein]-peptidylproline (omega=0). PPIases accelerate the folding of proteins. It catalyzes the cis-trans isomerization of proline imidic peptide bonds in oligopeptides. Acts as a regulatory subunit for PP2A-like phosphatases modulating their activity or substrate specificity, probably by inducing a conformational change in the catalytic subunit, a direct target of the PPIase. Can reactivate inactive phosphatase PP2A-phosphatase methylesterase complexes (PP2Ai) in presence of ATP and Mg(2+) by dissociating the inactive form from the complex. This chain is Serine/threonine-protein phosphatase 2A activator 1 (RRD1), found in Debaryomyces hansenii (strain ATCC 36239 / CBS 767 / BCRC 21394 / JCM 1990 / NBRC 0083 / IGC 2968) (Yeast).